A 76-amino-acid polypeptide reads, in one-letter code: Small proline-rich protein 2E (76 aa).

Tandem repeats lie at residues 21–29 (KKCPEPCPH), 30–38 (PQCPEPCPP), and 39–47 (PKCPEPCPE). A 3 X 9 AA approximate tandem repeats region spans residues 21–47 (KKCPEPCPHPQCPEPCPPPKCPEPCPE). Residues 52-76 (PSYQQKCPPVQPPPPCQQKCPPKSK) form a disordered region.

The protein belongs to the cornifin (SPRR) family. As to expression, expressed in uterus.

The protein localises to the cytoplasm. In terms of biological role, cross-linked envelope protein of keratinocytes. It is a keratinocyte protein that first appears in the cell cytosol, but ultimately becomes cross-linked to membrane proteins by transglutaminase. All that results in the formation of an insoluble envelope beneath the plasma membrane. The polypeptide is Small proline-rich protein 2E (Sprr2e) (Mus musculus (Mouse)).